The chain runs to 135 residues: NADPH-dependent 7-cyano-7-deazaguanine reductase (135 aa).

The active-site Thioimide intermediate is the cysteine 48. Residue aspartate 55 is the Proton donor of the active site. Substrate contacts are provided by residues 70–72 and 89–90; these read IEL and HE.

The protein belongs to the GTP cyclohydrolase I family. QueF type 1 subfamily.

It localises to the cytoplasm. The enzyme catalyses 7-aminomethyl-7-carbaguanine + 2 NADP(+) = 7-cyano-7-deazaguanine + 2 NADPH + 3 H(+). The protein operates within tRNA modification; tRNA-queuosine biosynthesis. Functionally, catalyzes the NADPH-dependent reduction of 7-cyano-7-deazaguanine (preQ0) to 7-aminomethyl-7-deazaguanine (preQ1). In Prochlorococcus marinus (strain MIT 9303), this protein is NADPH-dependent 7-cyano-7-deazaguanine reductase.